A 475-amino-acid polypeptide reads, in one-letter code: Aspartyl/glutamyl-tRNA(Asn/Gln) amidotransferase subunit B (475 aa).

It belongs to the GatB/GatE family. GatB subfamily. In terms of assembly, heterotrimer of A, B and C subunits.

It catalyses the reaction L-glutamyl-tRNA(Gln) + L-glutamine + ATP + H2O = L-glutaminyl-tRNA(Gln) + L-glutamate + ADP + phosphate + H(+). It carries out the reaction L-aspartyl-tRNA(Asn) + L-glutamine + ATP + H2O = L-asparaginyl-tRNA(Asn) + L-glutamate + ADP + phosphate + 2 H(+). In terms of biological role, allows the formation of correctly charged Asn-tRNA(Asn) or Gln-tRNA(Gln) through the transamidation of misacylated Asp-tRNA(Asn) or Glu-tRNA(Gln) in organisms which lack either or both of asparaginyl-tRNA or glutaminyl-tRNA synthetases. The reaction takes place in the presence of glutamine and ATP through an activated phospho-Asp-tRNA(Asn) or phospho-Glu-tRNA(Gln). The sequence is that of Aspartyl/glutamyl-tRNA(Asn/Gln) amidotransferase subunit B from Chlorobium phaeobacteroides (strain DSM 266 / SMG 266 / 2430).